The following is a 225-amino-acid chain: Insulin-induced gene 2 protein (225 aa).

Topologically, residues 1–28 (MAEGETESPRPKKRGPYISSVTSQSVNV) are cytoplasmic. Residues 29–51 (VIRGVVLFFIGVFLALVLNLLQI) form a helical membrane-spanning segment. The Lumenal segment spans residues 52-70 (QRNVTLFPPDVITSIFSSA). A helical transmembrane segment spans residues 71 to 88 (WWVPPCCGTASAVIGLLY). The Cytoplasmic portion of the chain corresponds to 89 to 103 (PCIDRHLGEPHKFKR). The helical transmembrane segment at 104 to 126 (EWSSVMRCVAVFVGINHASAKVD) threads the bilayer. Residues 127-129 (FDN) are Lumenal-facing. The helical transmembrane segment at 130–148 (NFQFSLTLAALSVGLWWTF) threads the bilayer. Residues 149–153 (DRSRS) are Cytoplasmic-facing. S151 is subject to Phosphoserine. Residues 154-175 (GFGLGVGIAFLATVVTQLLVYN) traverse the membrane as a helical segment. Over 176-189 (GVYQYTSPDFLYVR) the chain is Lumenal. A helical transmembrane segment spans residues 190–207 (SWLPCIFFAGGITMGNIG). Residues 208–225 (RQLAMYECKVIAEKSHQE) lie on the Cytoplasmic side of the membrane. C215 carries the post-translational modification Cysteine sulfenic acid (-SOH); alternate. C215 participates in a covalent cross-link: Glycyl cysteine thioester (Cys-Gly) (interchain with G-Cter in ubiquitin); alternate. The short motif at 219 to 225 (AEKSHQE) is the KxHxx element.

This sequence belongs to the INSIG family. Interacts with SCAP; interaction is direct and only takes place in the presence of sterols; it prevents interaction between SCAP and the coat protein complex II (COPII). Associates with the SCAP-SREBP complex (composed of SCAP and SREBF1/SREBP1 or SREBF2/SREBP2); association is mediated via its interaction with SCAP and only takes place in the presence of sterols. Interacts with RNF139. Interacts with RNF145. In terms of processing, phosphorylation at Ser-151 by PCK1 reduces binding to oxysterol, disrupting the interaction between INSIG2 and SCAP, thereby promoting nuclear translocation of SREBP proteins (SREBF1/SREBP1 or SREBF2/SREBP2) and subsequent transcription of downstream lipogenesis-related genes. Post-translationally, polyubiquitinated by AMFR/gp78 at Cys-215 in some tissues such as adipose tissues, undifferentiated myoblasts and liver, leading to its degradation. In differentiated myotubes, Cys-215 oxidation prevents ubiquitination at the same site, resulting in protein stabilization. Oxidized at Cys-215 in differentiated myotubes, preventing ubiquitination at the same site, and resulting in protein stabilization.

Its subcellular location is the endoplasmic reticulum membrane. Functionally, oxysterol-binding protein that mediates feedback control of cholesterol synthesis by controlling both endoplasmic reticulum to Golgi transport of SCAP and degradation of HMGCR. Acts as a negative regulator of cholesterol biosynthesis by mediating the retention of the SCAP-SREBP complex in the endoplasmic reticulum, thereby blocking the processing of sterol regulatory element-binding proteins (SREBPs) SREBF1/SREBP1 and SREBF2/SREBP2. Binds oxysterol, including 22-hydroxycholesterol, 24-hydroxycholesterol, 25-hydroxycholesterol and 27-hydroxycholesterol, regulating interaction with SCAP and retention of the SCAP-SREBP complex in the endoplasmic reticulum. In presence of oxysterol, interacts with SCAP, retaining the SCAP-SREBP complex in the endoplasmic reticulum, thereby preventing SCAP from escorting SREBF1/SREBP1 and SREBF2/SREBP2 to the Golgi. Sterol deprivation or phosphorylation by PCK1 reduce oxysterol-binding, disrupting the interaction between INSIG2 and SCAP, thereby promoting Golgi transport of the SCAP-SREBP complex, followed by processing and nuclear translocation of SREBF1/SREBP1 and SREBF2/SREBP2. Also regulates cholesterol synthesis by regulating degradation of HMGCR: initiates the sterol-mediated ubiquitin-mediated endoplasmic reticulum-associated degradation (ERAD) of HMGCR via recruitment of the reductase to the ubiquitin ligase RNF139. This chain is Insulin-induced gene 2 protein, found in Rattus norvegicus (Rat).